The chain runs to 311 residues: NEDD4 family-interacting protein 2 (311 aa).

Residues 1 to 133 (RRSASDAELS…PPYSSITVEA (133 aa)) form a disordered region. Residues 1–206 (RRSASDAELS…VEQLRVGNDG (206 aa)) lie on the Cytoplasmic side of the membrane. Over residues 7 to 22 (AELSAGAEGATGSEAA) the composition is skewed to low complexity. Positions 26–37 (DLGGRTRGGGRG) are enriched in gly residues. Low complexity predominate over residues 38 to 47 (SAAAAATTST). Residues 48–75 (REAEGAERRGDTPARKPDPEAGRMDHHQ) show a composition bias toward basic and acidic residues. Positions 92 to 101 (ESSAVEQPST) are enriched in polar residues. The segment covering 102-120 (SSLAAPTVEAAASAPALDP) has biased composition (low complexity). Residues 123–126 (PPPY) form an interaction with NEDD4 region. The PPxY motif 1 motif lies at 123–126 (PPPY). Tyrosine 126, tyrosine 142, tyrosine 146, and tyrosine 152 each carry phosphotyrosine; by SRC. 2 short sequence motifs (PPxY motif) span residues 149–152 (PPPY) and 159–161 (PTY). The helical transmembrane segment at 207 to 227 (IFMLAFFMAFIFNWLGFCLSF) threads the bilayer. Residues 228–232 (CITNT) lie on the Extracellular side of the membrane. Residues 233 to 253 (IAGRYGAICGFGLSLIKWILI) traverse the membrane as a helical segment. At 254-262 (VRFSDYFTG) the chain is on the cytoplasmic side. The helical transmembrane segment at 263-283 (YFNGQYWLWWIFLVLGLLLFF) threads the bilayer. Residues 284–311 (RGFVNYLKVRNMSESMAAAHRTRYFFLL) are Extracellular-facing.

As to quaternary structure, forms heterodimers with NDFIP1. Interacts with HECT domain-containing E3 ubiquitin-protein ligases, including NEDD4. Interacts with NEDD4L. When phosphorylated at Tyr-142, interacts with SRC and LYN SH2 domain. May thus act as a scaffold that recruits SRC to NDFIP1, enhancing NDFIP1 phosphorylation. Interacts with SLC11A2/DMT1. May interact with phosphorylated EGFR. Interacts with KCNH2. In terms of processing, ubiquitinated by NEDD4 and NEDD4L; which does not affect turnover. Also ubiquitinated by ITCH. Undergoes transient tyrosine-phosphorylation following EGF stimulation, most probably catalyzed by SRC. Phosphorylation on Tyr-126, Tyr-146 and Tyr-152 are dependent on the phosphorylation on Tyr-142. Also phosphorylated by LYN and FYN. As to expression, ubiquitously expressed, with highest levels in brain, liver, kidney and testis.

The protein resides in the endosome membrane. The protein localises to the golgi apparatus membrane. It is found in the endosome. It localises to the multivesicular body membrane. Functionally, activates HECT domain-containing E3 ubiquitin-protein ligases, including ITCH, NEDD4, NEDD4L, SMURF2, WWP1 and WWP2, and consequently modulates the stability of their targets. As a result, may control many cellular processes. Recruits ITCH, NEDD4 and SMURF2 to endosomal membranes. Negatively regulates KCNH2 potassium channel activity by decreasing its cell-surface expression and interfering with channel maturation through recruitment of NEDD4L to the Golgi apparatus and multivesicular body where it mediates KCNH2 degradation. May modulate EGFR signaling. Together with NDFIP1, limits the cytokine signaling and expansion of effector Th2 T-cells by promoting degradation of JAK1, probably by ITCH- and NEDD4L-mediated ubiquitination. This is NEDD4 family-interacting protein 2 (Ndfip2) from Mus musculus (Mouse).